The primary structure comprises 438 residues: Probable tRNA pseudouridine synthase D (438 aa).

Residue D86 is the Nucleophile of the active site. Positions G165–L390 constitute a TRUD domain.

The protein belongs to the pseudouridine synthase TruD family.

The catalysed reaction is uridine(13) in tRNA = pseudouridine(13) in tRNA. Could be responsible for synthesis of pseudouridine from uracil-13 in transfer RNAs. The sequence is that of Probable tRNA pseudouridine synthase D from Methanosarcina barkeri (strain Fusaro / DSM 804).